Consider the following 265-residue polypeptide: 5'-nucleotidase SurE (265 aa).

Asp8, Asp9, Ser40, and Asn98 together coordinate a divalent metal cation.

The protein belongs to the SurE nucleotidase family. It depends on a divalent metal cation as a cofactor.

The protein localises to the cytoplasm. The catalysed reaction is a ribonucleoside 5'-phosphate + H2O = a ribonucleoside + phosphate. In terms of biological role, nucleotidase that shows phosphatase activity on nucleoside 5'-monophosphates. This Trichormus variabilis (strain ATCC 29413 / PCC 7937) (Anabaena variabilis) protein is 5'-nucleotidase SurE.